The following is a 276-amino-acid chain: 4-diphosphocytidyl-2-C-methyl-D-erythritol kinase (276 aa).

Lys13 is a catalytic residue. Residue 94–104 (PHAGGIGGGSA) participates in ATP binding. Residue Asp131 is part of the active site.

The protein belongs to the GHMP kinase family. IspE subfamily.

It carries out the reaction 4-CDP-2-C-methyl-D-erythritol + ATP = 4-CDP-2-C-methyl-D-erythritol 2-phosphate + ADP + H(+). It participates in isoprenoid biosynthesis; isopentenyl diphosphate biosynthesis via DXP pathway; isopentenyl diphosphate from 1-deoxy-D-xylulose 5-phosphate: step 3/6. Its function is as follows. Catalyzes the phosphorylation of the position 2 hydroxy group of 4-diphosphocytidyl-2C-methyl-D-erythritol. In Jannaschia sp. (strain CCS1), this protein is 4-diphosphocytidyl-2-C-methyl-D-erythritol kinase.